The following is a 719-amino-acid chain: Endonuclease MutS2 (719 aa).

273–280 lines the ATP pocket; that stretch reads GPNTGGKT. Positions 644–719 constitute a Smr domain; sequence LDLRGYRYED…GFGVTVATLK (76 aa).

The protein belongs to the DNA mismatch repair MutS family. MutS2 subfamily. As to quaternary structure, homodimer. Binds to stalled ribosomes, contacting rRNA.

In terms of biological role, endonuclease that is involved in the suppression of homologous recombination and thus may have a key role in the control of bacterial genetic diversity. Its function is as follows. Acts as a ribosome collision sensor, splitting the ribosome into its 2 subunits. Detects stalled/collided 70S ribosomes which it binds and splits by an ATP-hydrolysis driven conformational change. Acts upstream of the ribosome quality control system (RQC), a ribosome-associated complex that mediates the extraction of incompletely synthesized nascent chains from stalled ribosomes and their subsequent degradation. Probably generates substrates for RQC. This Staphylococcus aureus protein is Endonuclease MutS2.